A 1215-amino-acid chain; its full sequence is Metabotropic glycine receptor (1215 aa).

The N-terminal stretch at 1-23 (MGAMAYPLLLCLLLAQLGLGAVG) is a signal peptide. Positions 23-66 (GASRDPQGRPDSPRERTPKGKPHAQQPGRASASDSSAPWSRSTD) are disordered. Topologically, residues 24–417 (ASRDPQGRPD…CFVQEDKYLR (394 aa)) are extracellular. The segment covering 28-40 (PQGRPDSPRERTP) has biased composition (basic and acidic residues). The segment covering 52-64 (ASASDSSAPWSRS) has biased composition (low complexity). The tract at residues 85 to 281 (YLYTGDSHQL…CENGSYKPGW (197 aa)) is cache-like region. N-linked (GlcNAc...) asparagine glycosylation is found at Asn-98 and Asn-143. A disulfide bridge connects residues Cys-99 and Cys-272. Glycine contacts are provided by Ser-172 and Arg-173. N-linked (GlcNAc...) asparagine glycosylation is present at Asn-215. Position 271 (Glu-271) interacts with glycine. Residue Asn-274 is glycosylated (N-linked (GlcNAc...) asparagine). Asp-307 contacts glycine. Asn-333 carries N-linked (GlcNAc...) asparagine glycosylation. A helical membrane pass occupies residues 418–439 (LAIISFQALCMLLDFVSMLVVY). Residues 440-451 (HFRKAKSIRASG) lie on the Cytoplasmic side of the membrane. Residues 452–474 (LILLETILFGSLLLYFPVVILYF) form a helical membrane-spanning segment. At 475–478 (EPST) the chain is on the extracellular side. A helical transmembrane segment spans residues 479–501 (FRCILLRWARLLGFATVYGTVTL). Cysteines 481 and 573 form a disulfide. Residues 502 to 525 (KLHRVLKVFLSRTAQRIPYMTGGR) lie on the Cytoplasmic side of the membrane. Residues 526 to 547 (VMRMLAVILLVVFWFLIGWTSS) traverse the membrane as a helical segment. The Extracellular segment spans residues 548–576 (VCQNLEKQISLIGQGKTSDHLIFNMCLID). A helical membrane pass occupies residues 577–597 (RWDYMTAVAEFLFLLWGVYLC). Residues 598-611 (YAVRTVPSAFHEPR) are Cytoplasmic-facing. The chain crosses the membrane as a helical span at residues 612–633 (YMAVAVHNELIISAIFHTIRFV). Over 634-642 (LASRLQSDW) the chain is Extracellular. A helical transmembrane segment spans residues 643–664 (MLMLYFAHTHLTVTVTIGLLLI). Over 665-1215 (PKFSHSSNNP…KEEIWDSFKV (551 aa)) the chain is Cytoplasmic. Phosphoserine is present on residues Ser-694, Ser-705, and Ser-708. Positions 757–999 (RITEIPETVS…LNPGTTQMKD (243 aa)) are disordered. Basic and acidic residues-rich tracts occupy residues 769–781 (CSKEDKEGADHGT) and 819–828 (STYDHVRDQT). Residue Lys-774 forms a Glycyl lysine isopeptide (Lys-Gly) (interchain with G-Cter in ubiquitin) linkage. At Ser-865 the chain carries Phosphoserine. Over residues 925–943 (VEERTKSQKPLPKDKETNR) the composition is skewed to basic and acidic residues. The residue at position 946 (Ser-946) is a Phosphoserine. Positions 979–998 (QRVNPTTANSDLNPGTTQMK) are enriched in polar residues. 2 consecutive short sequence motifs (VCPWE motif) follow at residues 1006–1010 (VCPWE) and 1071–1075 (VCLWE). Ser-1080 carries the phosphoserine modification. The interval 1117-1164 (SEELPPKAVASKTENENLNQIGHQEKKTSSSEENVRGSYNSSNNFQQP) is disordered. Positions 1139–1151 (HQEKKTSSSEENV) are enriched in basic and acidic residues. Residues 1153–1164 (GSYNSSNNFQQP) are compositionally biased toward polar residues. The VCPWE motif 3 signature appears at 1171–1175 (VCPWE).

Belongs to the G-protein coupled receptor 3 family. In terms of assembly, homodimer. Associates with the RGS7-GNB5 complex, promoting its localization to the cell membrane and regulating its GTPase activator activity. Interacts (via VCPWE motifs) with GNAO1. Interacts with GPC4. Interacts with EGFLAM.

Its subcellular location is the cell membrane. The protein resides in the postsynaptic cell membrane. It is found in the presynaptic cell membrane. The protein localises to the nucleus. Functionally, metabotropic receptor for glycine that controls synapse formation and function in the brain. Acts as an atypical G-protein coupled receptor that recruits and regulates the RGS7-GNB5 complex instead of activating G proteins. In absence of glycine ligand, promotes the GTPase activator activity of RGS7, increasing the GTPase activity of G protein alpha subunits, thereby driving them into their inactive GDP-bound form. Glycine-binding changes the conformation of the intracellular surface, inhibiting the GTPase activator activity of the RGS7-GNB5 complex, promoting G protein alpha subunits into their active GTP-bound form and regulating cAMP levels. Also able to bind taurine, a compound closely related to glycine, but with a two-fold lower affinity. Glycine receptor-dependent regulation of cAMP controls key ion channels, kinases and neurotrophic factors involved in neuronal excitability and synaptic transmission. Plays a pivotal role in regulating mood and cognition via its ability to regulate neuronal excitability in L2/L3 pyramidal neurons of the prefrontal cortex. Also involved in spatial learning by regulating hippocampal CA1 neuronal excitability. Acts as a synaptic organizer in the hippocampus, required for proper mossy fiber-CA3 neurocircuitry establishment, structure and function: induces presynaptic differentiation in contacting axons via its interaction with GPC4. In addition to glycine, may also act as a receptor for osteocalcin (BGLAP) hormone: osteocalcin-binding initiates a signaling response that prevents neuronal apoptosis in the hippocampus and regulates the synthesis of neurotransmitters. The chain is Metabotropic glycine receptor from Homo sapiens (Human).